Here is a 556-residue protein sequence, read N- to C-terminus: Beta-caryophyllene synthase TPS9FN (556 aa).

The (2E,6E)-farnesyl diphosphate site is built by Arg273, Asp310, Asp314, Arg451, and Asp454. 2 residues coordinate Mg(2+): Asp310 and Asp314. Positions 310–314 (DDIYD) match the DDXXD motif motif. Asp454, Ser458, and Glu462 together coordinate Mg(2+).

It belongs to the terpene synthase family. Tpsb subfamily. It depends on Mg(2+) as a cofactor. Mn(2+) is required as a cofactor. Expressed in glandular trichomes two to four weeks after flowering onset.

It carries out the reaction (2E,6E)-farnesyl diphosphate = (-)-(E)-beta-caryophyllene + diphosphate. The catalysed reaction is (2E,6E)-farnesyl diphosphate = alpha-humulene + diphosphate. The protein operates within secondary metabolite biosynthesis; terpenoid biosynthesis. In terms of biological role, involved in sesquiterpene olefins biosynthesis, constituants of cannabinoids and terpenoids-rich resins. Catalyzes mainly the conversion of (2E)-farnesyl diphosphate to beta-caryophyllene and alpha-humulene. Can also use (2E)-geranyl diphosphate as substrate with low efficiency. The protein is Beta-caryophyllene synthase TPS9FN of Cannabis sativa (Hemp).